The chain runs to 121 residues: Small ribosomal subunit protein uS13 (121 aa).

The tract at residues 99–121 (GQRTRTNARTRRGARKTVAGKKK) is disordered. A compositionally biased stretch (basic residues) spans 100–121 (QRTRTNARTRRGARKTVAGKKK).

The protein belongs to the universal ribosomal protein uS13 family. As to quaternary structure, part of the 30S ribosomal subunit. Forms a loose heterodimer with protein S19. Forms two bridges to the 50S subunit in the 70S ribosome.

In terms of biological role, located at the top of the head of the 30S subunit, it contacts several helices of the 16S rRNA. In the 70S ribosome it contacts the 23S rRNA (bridge B1a) and protein L5 of the 50S subunit (bridge B1b), connecting the 2 subunits; these bridges are implicated in subunit movement. Contacts the tRNAs in the A and P-sites. In Synechococcus sp. (strain RCC307), this protein is Small ribosomal subunit protein uS13.